We begin with the raw amino-acid sequence, 170 residues long: MVKYSTDPANPTKSAKAMGRDLRVHFKNTRETAFALRKMPLNKAKRYLEDVLAHKQAIPFRRYCRGVGRTAQVKNRQPNGQGRWPAKSAKFVLDLLKNAESNAEVKGLDVDALYISHIQVNQAQKQRRRTYRAHGRINPYMSNPCHIELILSEKEEPVKKEAESHIARKA.

This sequence belongs to the universal ribosomal protein uL22 family.

This chain is Large ribosomal subunit protein uL22z, found in Hordeum vulgare (Barley).